The chain runs to 1859 residues: U3 small nucleolar RNA-associated protein 10 (1859 aa).

Residues 258 to 278 (LGAYSVLAVLSAVAPLSIELL) traverse the membrane as a helical segment. One copy of the HEAT 1 repeat lies at 578-616 (VLPLLLIAFNDPSSHIRAAFAQLVQLVSEITKAIHENKK). Residues 1392–1412 (IVIASISAIVSIVNVLGIKTL) traverse the membrane as a helical segment. One copy of the HEAT 2 repeat lies at 1819-1857 (LVPHIAELLEDDDEAVEIEVREGLVRVIEKVLGEPLDRY).

Belongs to the HEATR1/UTP10 family. Component of the ribosomal small subunit (SSU) processome.

The protein resides in the nucleus. It localises to the nucleolus. It is found in the membrane. In terms of biological role, involved in nucleolar processing of pre-18S ribosomal RNA. Involved in ribosome biosynthesis. The polypeptide is U3 small nucleolar RNA-associated protein 10 (Lodderomyces elongisporus (strain ATCC 11503 / CBS 2605 / JCM 1781 / NBRC 1676 / NRRL YB-4239) (Yeast)).